We begin with the raw amino-acid sequence, 187 residues long: Phosphoheptose isomerase (187 aa).

Residues 34 to 187 (CIEALKNQKK…ILCSLIDESF (154 aa)) enclose the SIS domain. 49 to 51 (NGG) lines the substrate pocket. The Zn(2+) site is built by H58 and E62. Substrate contacts are provided by residues E62, 91–92 (ND), 117–119 (STS), S122, and Q169. Residues Q169 and H177 each coordinate Zn(2+).

The protein belongs to the SIS family. GmhA subfamily. Homotetramer. Requires Zn(2+) as cofactor.

The protein localises to the cytoplasm. It carries out the reaction 2 D-sedoheptulose 7-phosphate = D-glycero-alpha-D-manno-heptose 7-phosphate + D-glycero-beta-D-manno-heptose 7-phosphate. It participates in carbohydrate biosynthesis; D-glycero-D-manno-heptose 7-phosphate biosynthesis; D-glycero-alpha-D-manno-heptose 7-phosphate and D-glycero-beta-D-manno-heptose 7-phosphate from sedoheptulose 7-phosphate: step 1/1. In terms of biological role, catalyzes the isomerization of sedoheptulose 7-phosphate in D-glycero-D-manno-heptose 7-phosphate. The chain is Phosphoheptose isomerase from Nitratiruptor sp. (strain SB155-2).